Reading from the N-terminus, the 418-residue chain is MGDKGTRVFKKASPNGKLTVYLGKRDFVDHIDLVDPVDGVVLVDPEYLKERRVYVTLTCAFRYGREDLDVLGLTFRKDLFVANVQSFPPAPEDKKPLTRLQERLIKKLGEHAYPFTFEIPPNLPCSVTLQPGPEDTGKACGVDYEVKAFCAENLEEKIHKRNSVRLVIRKVQYAPERPGPQPTAETTRQFLMSDKPLHLEASLDKEIYYHGEPISVNVHVTNNTNKTVKKIKISVRQYADICLFNTAQYKCPVAMEEADDTVAPSSTFCKVYTLTPFLANNREKRGLALDGKLKHEDTNLASSTLLREGANREILGIIVSYKVKVKLVVSRGGLLGDLASSDVAVELPFTLMHPKPKEEPPHREVPESETPVDTNLIELDTNDDDIVFEDFARQRLKGMKDDKDEEDDGTGSPHLNNR.

The interaction with SRC stretch occupies residues 1–163 (MGDKGTRVFK…LEEKIHKRNS (163 aa)). The segment at 45–86 (PEYLKERRVYVTLTCAFRYGREDLDVLGLTFRKDLFVANVQS) is interaction with CHRM2. Tyr47 carries the phosphotyrosine modification. 1D-myo-inositol hexakisphosphate-binding residues include Lys250, Met255, Lys324, and Lys326. The tract at residues 318–418 (IVSYKVKVKL…GTGSPHLNNR (101 aa)) is interaction with TRAF6. 2 disordered regions span residues 353-374 (HPKP…PVDT) and 397-418 (KGMK…LNNR). Residues 355–366 (KPKEEPPHREVP) show a composition bias toward basic and acidic residues. Phosphoserine is present on Ser412. Phosphoserine; by GRK5 is present on Ser412.

It belongs to the arrestin family. Monomer. Homodimer. Homooligomer; the self-association is mediated by InsP6-binding. Heterooligomer with ARRB2; the association is mediated by InsP6-binding. Interacts with ADRB2 (phosphorylated). Interacts with CHRM2 (phosphorylated). Interacts with LHCGR. Interacts with CYTH2 and CASR. Interacts with AP2B1 (dephosphorylated at 'Tyr-737'); phosphorylation of AP2B1 at 'Tyr-737' disrupts the interaction. Interacts (dephosphorylated at Ser-412) with CLTC. Interacts with CCR2 and GRK2. Interacts with CRR5. Interacts with PTAFR (phosphorylated on serine residues). Interacts with CLTC and MAP2K3. Interacts with CREB1. Interacts with TRAF6. Interacts with IGF1R and MDM2. Interacts with C5AR1. Interacts with PDE4D. Interacts with SRC (via the SH3 domain and the protein kinase domain); the interaction is independent of the phosphorylation state of SRC C-terminus. Interacts with TACR1. Interacts with RAF1. Interacts with CHUK, IKBKB and MAP3K14. Interacts with DVL1; the interaction is enhanced by phosphorylation of DVL1. Interacts with DVL2; the interaction is enhanced by phosphorylation of DVL2. Interacts with IGF1R. Associates with MAP kinase p38. Part of a MAPK signaling complex consisting of TACR1, ARRB1, SRC, MAPK1 (activated) and MAPK3 (activated). Part of a MAPK signaling complex consisting of F2RL1, ARRB1, RAF1, MAPK1 (activated) and MAPK3 (activated). Interacts with GPR143. Interacts with MAP2K4/MKK4. Interacts with HCK and CXCR1 (phosphorylated). Interacts with ACKR3 and ACKR4. Interacts with ARRDC1; the interaction is direct. Interacts with GPR61, GPR62 and GPR135. In terms of processing, constitutively phosphorylated at Ser-412 in the cytoplasm. At the plasma membrane, is rapidly dephosphorylated, a process that is required for clathrin binding and beta-2 adrenergic receptor/ADRB2 endocytosis but not for ADRB2 binding and desensitization. Once internalized, is rephosphorylated. Post-translationally, the ubiquitination status appears to regulate the formation and trafficking of beta-arrestin-GPCR complexes and signaling. Ubiquitination appears to occur GPCR-specific. Ubiquitinated by MDM2; the ubiquitination is required for rapid internalization of ADRB2. Deubiquitinated by USP33; the deubiquitination leads to a dissociation of the beta-arrestin-GPCR complex. Stimulation of a class A GPCR, such as ADRB2, induces transient ubiquitination and subsequently promotes association with USP33. In terms of tissue distribution, predominantly localized in neuronal tissues and in the spleen.

The protein localises to the cytoplasm. Its subcellular location is the nucleus. It is found in the cell membrane. The protein resides in the membrane. It localises to the clathrin-coated pit. The protein localises to the cell projection. Its subcellular location is the pseudopodium. It is found in the cytoplasmic vesicle. Its function is as follows. Functions in regulating agonist-mediated G-protein coupled receptor (GPCR) signaling by mediating both receptor desensitization and resensitization processes. During homologous desensitization, beta-arrestins bind to the GPRK-phosphorylated receptor and sterically preclude its coupling to the cognate G-protein; the binding appears to require additional receptor determinants exposed only in the active receptor conformation. The beta-arrestins target many receptors for internalization by acting as endocytic adapters (CLASPs, clathrin-associated sorting proteins) and recruiting the GPRCs to the adapter protein 2 complex 2 (AP-2) in clathrin-coated pits (CCPs). However, the extent of beta-arrestin involvement appears to vary significantly depending on the receptor, agonist and cell type. Internalized arrestin-receptor complexes traffic to intracellular endosomes, where they remain uncoupled from G-proteins. Two different modes of arrestin-mediated internalization occur. Class A receptors, like ADRB2, OPRM1, ENDRA, D1AR and ADRA1B dissociate from beta-arrestin at or near the plasma membrane and undergo rapid recycling. Class B receptors, like AVPR2, AGTR1, NTSR1, TRHR and TACR1 internalize as a complex with arrestin and traffic with it to endosomal vesicles, presumably as desensitized receptors, for extended periods of time. Receptor resensitization then requires that receptor-bound arrestin is removed so that the receptor can be dephosphorylated and returned to the plasma membrane. Involved in internalization of P2RY4 and UTP-stimulated internalization of P2RY2. Involved in phosphorylation-dependent internalization of OPRD1 ands subsequent recycling. Involved in the degradation of cAMP by recruiting cAMP phosphodiesterases to ligand-activated receptors. Beta-arrestins function as multivalent adapter proteins that can switch the GPCR from a G-protein signaling mode that transmits short-lived signals from the plasma membrane via small molecule second messengers and ion channels to a beta-arrestin signaling mode that transmits a distinct set of signals that are initiated as the receptor internalizes and transits the intracellular compartment. Acts as a signaling scaffold for MAPK pathways such as MAPK1/3 (ERK1/2). ERK1/2 activated by the beta-arrestin scaffold is largely excluded from the nucleus and confined to cytoplasmic locations such as endocytic vesicles, also called beta-arrestin signalosomes. Recruits c-Src/SRC to ADRB2 resulting in ERK activation. GPCRs for which the beta-arrestin-mediated signaling relies on both ARRB1 and ARRB2 (codependent regulation) include ADRB2, F2RL1 and PTH1R. For some GPCRs the beta-arrestin-mediated signaling relies on either ARRB1 or ARRB2 and is inhibited by the other respective beta-arrestin form (reciprocal regulation). Inhibits ERK1/2 signaling in AGTR1- and AVPR2-mediated activation (reciprocal regulation). Is required for SP-stimulated endocytosis of NK1R and recruits c-Src/SRC to internalized NK1R resulting in ERK1/2 activation, which is required for the antiapoptotic effects of SP. Is involved in proteinase-activated F2RL1-mediated ERK activity. Acts as a signaling scaffold for the AKT1 pathway. Is involved in alpha-thrombin-stimulated AKT1 signaling. Is involved in IGF1-stimulated AKT1 signaling leading to increased protection from apoptosis. Involved in activation of the p38 MAPK signaling pathway and in actin bundle formation. Involved in F2RL1-mediated cytoskeletal rearrangement and chemotaxis. Involved in AGTR1-mediated stress fiber formation by acting together with GNAQ to activate RHOA. Appears to function as signaling scaffold involved in regulation of MIP-1-beta-stimulated CCR5-dependent chemotaxis. Involved in attenuation of NF-kappa-B-dependent transcription in response to GPCR or cytokine stimulation by interacting with and stabilizing CHUK. May serve as nuclear messenger for GPCRs. Involved in OPRD1-stimulated transcriptional regulation by translocating to CDKN1B and FOS promoter regions and recruiting EP300 resulting in acetylation of histone H4. Involved in regulation of LEF1 transcriptional activity via interaction with DVL1 and/or DVL2 Also involved in regulation of receptors other than GPCRs. Involved in Toll-like receptor and IL-1 receptor signaling through the interaction with TRAF6 which prevents TRAF6 autoubiquitination and oligomerization required for activation of NF-kappa-B and JUN. Binds phosphoinositides. Binds inositolhexakisphosphate (InsP6). Involved in IL8-mediated granule release in neutrophils. Required for atypical chemokine receptor ACKR2-induced RAC1-LIMK1-PAK1-dependent phosphorylation of cofilin (CFL1) and for the up-regulation of ACKR2 from endosomal compartment to cell membrane, increasing its efficiency in chemokine uptake and degradation. Involved in the internalization of the atypical chemokine receptor ACKR3. Negatively regulates the NOTCH signaling pathway by mediating the ubiquitination and degradation of NOTCH1 by ITCH. Participates in the recruitment of the ubiquitin-protein ligase to the receptor. This chain is Beta-arrestin-1, found in Rattus norvegicus (Rat).